A 215-amino-acid polypeptide reads, in one-letter code: WAT1-related protein At3g28060 (215 aa).

5 helical membrane passes run 48–68 (IIIG…AVAY), 82–102 (FALA…VSLF), 117–137 (IMLI…VVES), 146–166 (VFLA…GAIF), and 176–196 (VIGG…FHIA). Positions 65–186 (AVAYIVQTHI…IGGTLISIGF (122 aa)) constitute an EamA domain.

It belongs to the drug/metabolite transporter (DMT) superfamily. Plant drug/metabolite exporter (P-DME) (TC 2.A.7.4) family.

It localises to the membrane. The polypeptide is WAT1-related protein At3g28060 (Arabidopsis thaliana (Mouse-ear cress)).